Consider the following 355-residue polypeptide: Putative L-lysine 2,3-aminomutase (355 aa).

The region spanning 93 to 308 (VHQYANRVLM…KERLSGLSLP (216 aa)) is the Radical SAM core domain. Positions 108, 112, and 115 each coordinate [4Fe-4S] cluster. At Lys320 the chain carries N6-(pyridoxal phosphate)lysine.

The protein belongs to the radical SAM superfamily. KamA family. Requires [4Fe-4S] cluster as cofactor. The cofactor is pyridoxal 5'-phosphate.

The polypeptide is Putative L-lysine 2,3-aminomutase (Treponema pallidum (strain Nichols)).